The primary structure comprises 317 residues: Cell division protein FtsQ (317 aa).

The Cytoplasmic segment spans residues 1–63; sequence MDGGGRFVFA…RIHIPAHTGT (63 aa). A helical membrane pass occupies residues 64–82; sequence ISAVAFYAMIGLYGMSLGG. At 83–317 the chain is on the periplasmic side; it reads HTNIVTQTTT…KALKKAEKNT (235 aa). The region spanning 97–165 is the POTRA domain; it reads FAVEDVKVSG…KTVEVRLKER (69 aa).

This sequence belongs to the FtsQ/DivIB family. FtsQ subfamily.

The protein resides in the cell inner membrane. In terms of biological role, essential cell division protein. This Agrobacterium fabrum (strain C58 / ATCC 33970) (Agrobacterium tumefaciens (strain C58)) protein is Cell division protein FtsQ.